The chain runs to 317 residues: Ribosomal protein L11 methyltransferase (317 aa).

S-adenosyl-L-methionine contacts are provided by Thr158, Gly179, Asp201, and Asn244.

Belongs to the methyltransferase superfamily. PrmA family.

Its subcellular location is the cytoplasm. The catalysed reaction is L-lysyl-[protein] + 3 S-adenosyl-L-methionine = N(6),N(6),N(6)-trimethyl-L-lysyl-[protein] + 3 S-adenosyl-L-homocysteine + 3 H(+). In terms of biological role, methylates ribosomal protein L11. In Streptococcus pyogenes serotype M6 (strain ATCC BAA-946 / MGAS10394), this protein is Ribosomal protein L11 methyltransferase.